A 73-amino-acid chain; its full sequence is Mu-sparatoxin-Hv2 (73 aa).

A signal peptide spans 1 to 20; the sequence is MKFAIVITLLLVAFSAVALA. A propeptide spanning residues 21-35 is cleaved from the precursor; it reads DKSIERAVMDLITAR. 3 cysteine pairs are disulfide-bonded: cysteine 39–cysteine 53, cysteine 46–cysteine 58, and cysteine 52–cysteine 68. Phenylalanine 72 carries the phenylalanine amide modification.

Belongs to the neurotoxin 10 (Hwtx-1) family. Expressed by the venom gland.

Its subcellular location is the secreted. Insecticidal toxin that potently and irreversibly blocks voltage-gated sodium channels (Nav) in cockroach dorsal unpaired median (DUM) neurons (IC(50)=833.7 nM). It does not change both the steady-state activation and inactivation curves, suggesting it acts as a pore blocker (possibly at Nav site 1). Does not show toxicity when intraperitoneally injected into mouse. The sequence is that of Mu-sparatoxin-Hv2 from Heteropoda venatoria (Brown huntsman spider).